A 220-amino-acid polypeptide reads, in one-letter code: 7-cyano-7-deazaguanine synthase (220 aa).

11–21 (VSGGMDSVTLM) contributes to the ATP binding site. Zn(2+) contacts are provided by cysteine 186, cysteine 194, cysteine 197, and cysteine 200.

It belongs to the QueC family. The cofactor is Zn(2+).

It catalyses the reaction 7-carboxy-7-deazaguanine + NH4(+) + ATP = 7-cyano-7-deazaguanine + ADP + phosphate + H2O + H(+). The protein operates within purine metabolism; 7-cyano-7-deazaguanine biosynthesis. Catalyzes the ATP-dependent conversion of 7-carboxy-7-deazaguanine (CDG) to 7-cyano-7-deazaguanine (preQ(0)). This Porphyromonas gingivalis (strain ATCC BAA-308 / W83) protein is 7-cyano-7-deazaguanine synthase.